We begin with the raw amino-acid sequence, 226 residues long: ADP-ribosylation factor-like protein 6-interacting protein 6 (226 aa).

Residues Met1–Pro26 form a disordered region. Ser2, Ser36, Ser60, Ser65, and Ser80 each carry phosphoserine. The segment at Gly62 to Pro81 is disordered. Transmembrane regions (helical) follow at residues Ile111–Ile131, Leu150–Phe170, and Met205–Leu225.

Belongs to the ARL6IP6 family.

The protein resides in the nucleus inner membrane. This chain is ADP-ribosylation factor-like protein 6-interacting protein 6 (ARL6IP6), found in Bos taurus (Bovine).